The sequence spans 290 residues: Prepilin leader peptidase/N-methyltransferase (290 aa).

Residues 14–34 (LYFSLVFLFSLMIGSFLNVVI) traverse the membrane as a helical segment. 4 residues coordinate Zn(2+): Cys74, Cys77, Cys99, and Cys102. 6 consecutive transmembrane segments (helical) span residues 106 to 126 (ISARYPLVELLTALLSVAVAM), 130 to 150 (PGWGTLAALLLTWVLVALTFI), 161 to 181 (LTLPLLWGGLLFNLLGGFVSL), 185 to 205 (VIGAMAGYLVLWSLYWAFKLL), 232 to 252 (PIVLLLSSLVGAFMGIGLILL), and 261 to 281 (IPFGPYLAIAGWIALLWGDSI).

The protein belongs to the peptidase A24 family. Zn(2+) serves as cofactor.

The protein localises to the cell inner membrane. It carries out the reaction Typically cleaves a -Gly-|-Phe- bond to release an N-terminal, basic peptide of 5-8 residues from type IV prepilin, and then N-methylates the new N-terminal amino group, the methyl donor being S-adenosyl-L-methionine.. In terms of biological role, plays an essential role in type IV pili and type II pseudopili formation by proteolytically removing the leader sequence from substrate proteins and subsequently monomethylating the alpha-amino group of the newly exposed N-terminal phenylalanine. The protein is Prepilin leader peptidase/N-methyltransferase (tapD) of Aeromonas hydrophila.